A 64-amino-acid chain; its full sequence is Prokaryotic ubiquitin-like protein UBact (64 aa).

Residues 1-64 (MFNGEEVILF…SERYRQRTGE (64 aa)) form a disordered region. The segment covering 22–64 (REIHKDAPAPKRPETKKTGDRLMDRMKKVDPNQSERYRQRTGE) has biased composition (basic and acidic residues). Residue Glu64 forms an Isoglutamyl lysine isopeptide (Glu-Lys) (interchain with K-? in acceptor proteins) linkage.

This sequence belongs to the ubiquitin-like protein UBact family.

May function as a protein modifier covalently attached to lysine residues of substrate proteins. This may serve to target the modified proteins for degradation by proteasomes. The protein is Prokaryotic ubiquitin-like protein UBact of Leptospirillum ferriphilum (strain ML-04).